The chain runs to 522 residues: MSVKNNSFSSAEIPDVADQPRDRFNPEATQDLQEKDETKEEKEGDEEVKHDEAEEDQEVVKPNDAEEDDDGDDAEEDEEEEVEAEEDEEAEEEEEEEEEEEEEEEDSKERSPSSISGDQSEFMEIDLGEIRKDVQCPICLGIIKKTRTVMECLHRFCRECIDKSMRLGNNECPACRKHCASRRSLRDDPKFDALIAALFTNIDSYEEEELAFHEDEMARNKQIQASIAQISQRQSEALVKRRSLGKEAAVLMRSPRIASGSRRRRNSRNMEQQNASEAHEDDDNDDNNNRGRDKDSSSDERGTEVRQKKRRKRSTSRSTQHPSSSGANKNNGNCADNDTEVYRDTKGISPGLVWNPEILAWGRGGTRSNTRHGNNTSGGSSKSVRNARVNKLVEYLRSSVDGSSVELDIHVKLVSLDTKCIPDLPQPYLCCRPTLLVKQLREFVALQIHLKTEEVELLVTRRRVGEDAAIENLPAVTPASAAASKDEMLSLEDNETLSRLKIDFISSHEQHLIIAYRKKQTE.

Polar residues predominate over residues 1 to 10 (MSVKNNSFSS). The tract at residues 1 to 119 (MSVKNNSFSS…RSPSSISGDQ (119 aa)) is disordered. Basic and acidic residues predominate over residues 32 to 64 (LQEKDETKEEKEGDEEVKHDEAEEDQEVVKPND). Residues 65 to 106 (AEEDDDGDDAEEDEEEEVEAEEDEEAEEEEEEEEEEEEEEED) show a composition bias toward acidic residues. The RING-type zinc-finger motif lies at 136–176 (CPICLGIIKKTRTVMECLHRFCRECIDKSMRLGNNECPACR). 2 disordered regions span residues 250-347 (VLMR…DTKG) and 363-385 (RGGTRSNTRHGNNTSGGSSKSVR). Basic and acidic residues predominate over residues 287 to 306 (NNNRGRDKDSSSDERGTEVR). The segment covering 316–325 (SRSTQHPSSS) has biased composition (low complexity). Composition is skewed to polar residues over residues 326-336 (GANKNNGNCAD) and 366-384 (TRSNTRHGNNTSGGSSKSV).

As to quaternary structure, homodimer or heterodimer with RING1B. Interacts with CLF. Component of the PRC1-like complex, at least composed of RING1A, RING1B and LHP1.

Its subcellular location is the nucleus. The catalysed reaction is S-ubiquitinyl-[E2 ubiquitin-conjugating enzyme]-L-cysteine + [acceptor protein]-L-lysine = [E2 ubiquitin-conjugating enzyme]-L-cysteine + N(6)-ubiquitinyl-[acceptor protein]-L-lysine.. Its pathway is protein modification; protein ubiquitination. In terms of biological role, putative E3 ubiquitin-protein ligase that mediates monoubiquitination of 'Lys-119' of histone H2A (H2AK119ub), thereby playing a central role in histone code and gene regulation. Its function is as follows. As part of the PRC1-like complex, repress class I KNOX gene expression. PcG PRC1 complex maintains the transcriptionally repressive state of many genes, including Hox genes, throughout development. PcG PRC1 complex acts via chromatin remodeling and modification of histones, rendering chromatin heritably changed in its expressibility. The polypeptide is Putative E3 ubiquitin-protein ligase RING1a (RING1A) (Arabidopsis thaliana (Mouse-ear cress)).